Consider the following 592-residue polypeptide: Frizzled-1 (592 aa).

The interval 1-26 (MAERRGPAGGGSGEVGGGRRAGGDRC) is disordered. The N-terminal stretch at 1–48 (MAERRGPAGGGSGEVGGGRRAGGDRCPRRPPALPLLLLLWAAALPAGG) is a signal peptide. A compositionally biased stretch (gly residues) spans 7-20 (PAGGGSGEVGGGRR). At 49 to 271 (QPAAQPAALS…PEELRFSRTW (223 aa)) the chain is on the extracellular side. The 120-residue stretch at 65 to 184 (PDHGYCQPIS…HGAGELCVGQ (120 aa)) folds into the FZ domain. Disulfide bonds link Cys-70–Cys-131, Cys-78–Cys-124, Cys-115–Cys-152, Cys-141–Cys-181, and Cys-145–Cys-169. An N-linked (GlcNAc...) asparagine glycan is attached at Asn-84. N-linked (GlcNAc...) asparagine glycosylation is present at Asn-185. The tract at residues 185–219 (NASERGTPTPALRPESWTSNPHRGGGAGGSGPGEA) is disordered. Gly residues predominate over residues 207 to 218 (RGGGAGGSGPGE). Residues 272 to 292 (IGIWSVLCCASTLFTVLTYLV) traverse the membrane as a helical segment. Topologically, residues 293 to 303 (DMKRFSYPERP) are cytoplasmic. The helical transmembrane segment at 304–324 (IIFLSGCYTAVAVAYIAGFLL) threads the bilayer. Residues 325–351 (EERVVCNERFAEDGSRTVAQGTKREGC) lie on the Extracellular side of the membrane. The helical transmembrane segment at 352–372 (TILFMMLYFFGMASSIWWVIL) threads the bilayer. Residues 373 to 394 (SLTWFLAAGMKWGHEAIEANSQ) lie on the Cytoplasmic side of the membrane. A helical membrane pass occupies residues 395–415 (YFHLAAWAVPAIKTITILALG). Residues 416-438 (QVDGDVLSGVCFVGINNVDALRG) lie on the Extracellular side of the membrane. The helical transmembrane segment at 439–459 (FVLAPLFVYLFIGTSFLLAGF) threads the bilayer. Over 460 to 485 (VSLFRIRTIMKHDGTKTEKLEKLMVR) the chain is Cytoplasmic. A helical membrane pass occupies residues 486–506 (IGIFSVLYTVPATIVIACYFY). Residues 507 to 546 (EQAFREQWERSWVTQSCKSYAIPCPNNHSSHHPPMSPDFT) lie on the Extracellular side of the membrane. The N-linked (GlcNAc...) asparagine glycan is linked to Asn-533. The helical transmembrane segment at 547–567 (VFMIKYLMTLIVGITSGFWIW) threads the bilayer. At 568 to 592 (SGKTLNSWRKFYTRLTNSKQGETTV) the chain is on the cytoplasmic side. The Lys-Thr-X-X-X-Trp motif, mediates interaction with the PDZ domain of Dvl family members motif lies at 570–575 (KTLNSW). Positions 590–592 (TTV) match the PDZ-binding motif.

This sequence belongs to the G-protein coupled receptor Fz/Smo family. As to expression, expressed in the lens, otic placode (medial wall of the vesicle) and in epibranchial placode. Also expressed in the developing somites (dermomyotome).

It is found in the cell membrane. Receptor for Wnt proteins. Functions in the canonical Wnt/beta-catenin signaling pathway. The canonical Wnt/beta-catenin signaling pathway leads to the activation of disheveled proteins, inhibition of GSK-3 kinase, nuclear accumulation of beta-catenin and activation of Wnt target genes. A second signaling pathway involving PKC and calcium fluxes has been seen for some family members, but it is not yet clear if it represents a distinct pathway or if it can be integrated in the canonical pathway, as PKC seems to be required for Wnt-mediated inactivation of GSK-3 kinase. Both pathways seem to involve interactions with G-proteins. May be involved in transduction and intercellular transmission of polarity information during tissue morphogenesis and/or in differentiated tissues. This is Frizzled-1 (FZD1) from Gallus gallus (Chicken).